A 152-amino-acid polypeptide reads, in one-letter code: D-aminoacyl-tRNA deacylase (152 aa).

Residues 137 to 138 (GP) carry the Gly-cisPro motif, important for rejection of L-amino acids motif.

The protein belongs to the DTD family. As to quaternary structure, homodimer.

The protein localises to the cytoplasm. It carries out the reaction glycyl-tRNA(Ala) + H2O = tRNA(Ala) + glycine + H(+). The catalysed reaction is a D-aminoacyl-tRNA + H2O = a tRNA + a D-alpha-amino acid + H(+). Functionally, an aminoacyl-tRNA editing enzyme that deacylates mischarged D-aminoacyl-tRNAs. Also deacylates mischarged glycyl-tRNA(Ala), protecting cells against glycine mischarging by AlaRS. Acts via tRNA-based rather than protein-based catalysis; rejects L-amino acids rather than detecting D-amino acids in the active site. By recycling D-aminoacyl-tRNA to D-amino acids and free tRNA molecules, this enzyme counteracts the toxicity associated with the formation of D-aminoacyl-tRNA entities in vivo and helps enforce protein L-homochirality. This is D-aminoacyl-tRNA deacylase from Aromatoleum aromaticum (strain DSM 19018 / LMG 30748 / EbN1) (Azoarcus sp. (strain EbN1)).